The following is a 246-amino-acid chain: tRNA pseudouridine synthase A (246 aa).

The active-site Nucleophile is the Asp-53. Residue Tyr-111 participates in substrate binding.

The protein belongs to the tRNA pseudouridine synthase TruA family. As to quaternary structure, homodimer.

It catalyses the reaction uridine(38/39/40) in tRNA = pseudouridine(38/39/40) in tRNA. In terms of biological role, formation of pseudouridine at positions 38, 39 and 40 in the anticodon stem and loop of transfer RNAs. This is tRNA pseudouridine synthase A from Anoxybacillus flavithermus (strain DSM 21510 / WK1).